Reading from the N-terminus, the 223-residue chain is Cytidylate kinase (223 aa).

10 to 18 is a binding site for ATP; the sequence is GPASSGKST.

It belongs to the cytidylate kinase family. Type 1 subfamily.

It localises to the cytoplasm. The enzyme catalyses CMP + ATP = CDP + ADP. The catalysed reaction is dCMP + ATP = dCDP + ADP. This Streptococcus pneumoniae serotype 4 (strain ATCC BAA-334 / TIGR4) protein is Cytidylate kinase.